A 338-amino-acid polypeptide reads, in one-letter code: Fructose-1,6-bisphosphatase class 1 (338 aa).

Residues Glu92, Asp115, Leu117, and Asp118 each coordinate Mg(2+). Residues Asp118–Ser121, Asn211, Tyr244, Tyr262–Tyr264, and Lys274 each bind substrate. Residue Glu280 participates in Mg(2+) binding.

The protein belongs to the FBPase class 1 family. As to quaternary structure, homotetramer. The cofactor is Mg(2+).

The protein localises to the cytoplasm. It catalyses the reaction beta-D-fructose 1,6-bisphosphate + H2O = beta-D-fructose 6-phosphate + phosphate. The protein operates within carbohydrate biosynthesis; gluconeogenesis. This is Fructose-1,6-bisphosphatase class 1 from Vibrio vulnificus (strain YJ016).